Reading from the N-terminus, the 337-residue chain is Putative high mobility group B protein 11 (337 aa).

Positions Val34–Tyr125 constitute an ARID domain. Disordered stretches follow at residues Thr197 to Gly221 and Ala298 to Gln337. The segment at residues Pro215 to Arg282 is a DNA-binding region (HMG box). The span at Thr319–Ala329 shows a compositional bias: low complexity.

Belongs to the HMGB family.

It is found in the nucleus. Its function is as follows. Binds preferentially DNA with A/T-rich content. The polypeptide is Putative high mobility group B protein 11 (HMGB11) (Arabidopsis thaliana (Mouse-ear cress)).